Consider the following 162-residue polypeptide: Troponin C, skeletal muscle (162 aa).

4 EF-hand domains span residues 17-52, 53-88, 93-128, and 129-162; these read EMIA…LGQN, PTKE…QMKE, KSEE…TGEH, and VTEE…EGVQ. Ca(2+) is bound by residues aspartate 30, aspartate 32, aspartate 36, glutamate 41, aspartate 66, aspartate 68, serine 70, threonine 72, glutamate 77, aspartate 106, asparagine 108, aspartate 110, glutamate 117, aspartate 142, asparagine 144, aspartate 146, arginine 148, and glutamate 153.

It belongs to the troponin C family.

Functionally, troponin is the central regulatory protein of striated muscle contraction. Tn consists of three components: Tn-I which is the inhibitor of actomyosin ATPase, Tn-T which contains the binding site for tropomyosin and Tn-C. The binding of calcium to Tn-C abolishes the inhibitory action of Tn on actin filaments. The chain is Troponin C, skeletal muscle (TNNC2) from Meleagris gallopavo (Wild turkey).